The sequence spans 416 residues: Glutamyl-tRNA reductase (416 aa).

Substrate-binding positions include 49 to 52, Ser105, 110 to 112, and Gln116; these read TCNR and EPQ. The active-site Nucleophile is Cys50. An NADP(+)-binding site is contributed by 185–190; it reads GAGETI.

Belongs to the glutamyl-tRNA reductase family. In terms of assembly, homodimer.

The catalysed reaction is (S)-4-amino-5-oxopentanoate + tRNA(Glu) + NADP(+) = L-glutamyl-tRNA(Glu) + NADPH + H(+). It functions in the pathway porphyrin-containing compound metabolism; protoporphyrin-IX biosynthesis; 5-aminolevulinate from L-glutamyl-tRNA(Glu): step 1/2. In terms of biological role, catalyzes the NADPH-dependent reduction of glutamyl-tRNA(Glu) to glutamate 1-semialdehyde (GSA). The chain is Glutamyl-tRNA reductase from Shewanella loihica (strain ATCC BAA-1088 / PV-4).